The primary structure comprises 469 residues: E3 ubiquitin-protein ligase pellino homolog 3 (469 aa).

The tract at residues methionine 1 to glutamate 39 is disordered. Serine 11 carries the post-translational modification Phosphoserine.

This sequence belongs to the pellino family. In terms of assembly, interacts with TRAF6, MAP3K14 and MAP3K7. In terms of processing, phosphorylated by IRAK1 enhancing its E3 ligase activity. Highly expressed in brain, heart and testis, and at lower level in kidney, liver, lung, placenta, small intestine, spleen and stomach. Isoform 1 is not expressed in lung.

It carries out the reaction S-ubiquitinyl-[E2 ubiquitin-conjugating enzyme]-L-cysteine + [acceptor protein]-L-lysine = [E2 ubiquitin-conjugating enzyme]-L-cysteine + N(6)-ubiquitinyl-[acceptor protein]-L-lysine.. It participates in protein modification; protein ubiquitination. E3 ubiquitin ligase catalyzing the covalent attachment of ubiquitin moieties onto substrate proteins. Involved in the TLR and IL-1 signaling pathways via interaction with the complex containing IRAK kinases and TRAF6. Mediates 'Lys-63'-linked polyubiquitination of IRAK1. Can activate AP1/JUN and ELK1. Acts as a regulator of innate immunity by mediating 'Lys-63'-linked polyubiquitination of RIPK2 downstream of NOD1 and NOD2, thereby transforming RIPK2 into a scaffolding protein for downstream effectors, ultimately leading to activation of the NF-kappa-B and MAP kinases signaling. Catalyzes 'Lys-63'-linked polyubiquitination of RIPK2 in parallel of XIAP. This Homo sapiens (Human) protein is E3 ubiquitin-protein ligase pellino homolog 3.